Reading from the N-terminus, the 404-residue chain is Cysteine desulfurase IscS (404 aa).

Pyridoxal 5'-phosphate contacts are provided by residues 75–76, N155, Q183, and 203–205; these read AT and SAH. Position 206 is an N6-(pyridoxal phosphate)lysine (K206). A pyridoxal 5'-phosphate-binding site is contributed by T243. C328 serves as the catalytic Cysteine persulfide intermediate. C328 is a binding site for [2Fe-2S] cluster.

It belongs to the class-V pyridoxal-phosphate-dependent aminotransferase family. NifS/IscS subfamily. In terms of assembly, homodimer. Forms a heterotetramer with IscU, interacts with other sulfur acceptors. It depends on pyridoxal 5'-phosphate as a cofactor.

Its subcellular location is the cytoplasm. It carries out the reaction (sulfur carrier)-H + L-cysteine = (sulfur carrier)-SH + L-alanine. It functions in the pathway cofactor biosynthesis; iron-sulfur cluster biosynthesis. Master enzyme that delivers sulfur to a number of partners involved in Fe-S cluster assembly, tRNA modification or cofactor biosynthesis. Catalyzes the removal of elemental sulfur atoms from cysteine to produce alanine. Functions as a sulfur delivery protein for Fe-S cluster synthesis onto IscU, an Fe-S scaffold assembly protein, as well as other S acceptor proteins. This is Cysteine desulfurase IscS from Shewanella woodyi (strain ATCC 51908 / MS32).